The primary structure comprises 211 residues: Ribosomal RNA large subunit methyltransferase E (211 aa).

S-adenosyl-L-methionine contacts are provided by Gly55, Trp57, Asp75, Asp93, and Asp117. The active-site Proton acceptor is Lys157.

It belongs to the class I-like SAM-binding methyltransferase superfamily. RNA methyltransferase RlmE family.

The protein resides in the cytoplasm. It catalyses the reaction uridine(2552) in 23S rRNA + S-adenosyl-L-methionine = 2'-O-methyluridine(2552) in 23S rRNA + S-adenosyl-L-homocysteine + H(+). Its function is as follows. Specifically methylates the uridine in position 2552 of 23S rRNA at the 2'-O position of the ribose in the fully assembled 50S ribosomal subunit. The chain is Ribosomal RNA large subunit methyltransferase E from Methanothermobacter thermautotrophicus (strain ATCC 29096 / DSM 1053 / JCM 10044 / NBRC 100330 / Delta H) (Methanobacterium thermoautotrophicum).